We begin with the raw amino-acid sequence, 1663 residues long: MATDGASCEPDFSRAPEDAAGATAEAAKQDFDVDALSKSELRMLLSVMEGELEARDLVIEALRARRKEVFIQERYGRFNLNDPFLALQRDYEAGAGDKEKKPVCANPLSILEAVMAHCRKMQERMSTQLAAAESRQKKLEMEKLQLQALELEHKKLAARLEEERGKNKHVVLMLVKECKQLSGRVIEEAQKLEDVMAKLDEEKKKTSALEEELSTEKRRSTDMEAQMEKQLSEFDTEREQLRAKLHREEAHTADLKEEIDKMKKMIEQLKRGSDSKPSLSLPRKTKDRRLVSISVGTEGPMTRSVACQTDPVIESTDHVKKLPLTVPVKPSTGSPLVSANAKGNACTSAALVRPGIDRQASHGDLIGSSLPTVPPPSATRVEENGPSTDSAPDLTNSTPPVPSSTAPPAMQTPGAAPQSHSQAPLHSLHSPSANASLHPGLNPRIQAARFRFQGNANDPDQNGNTTQSPPSRDVSPTSRDNLVAKQLARNTVTQALSRFTGPPAGAPPRHGVPPSGDVGTYPPVGRTNVKTPGVARVDRGNPPPIPPKKPGLSQAPSPPHPQLKVVMDSSRAPSAGAKVDNKTVASPPSSLPPGNRVINEENLPKPTTPQLPPKPSIDLTVAPAGCAVSALATSQVGAWPAETPGLNQPACSERSLVIPTTIAFCSSINPVSASSCRAGASDSLLVTASGWSPSLTFLLMSGGPAPLAGRPTLLQQAAAQGNVTLLSMLLNEEGLDINYSCEDGHSALYSAAKNGHTDCVRLLLNAEAQVDAADKNGFTPLCAAAAQGHFKCVELLTAYDADINHTADGGQTPLYLACKNGNKECIKLLLEAGSDRSVKTSDGWTPLHAAVDTGNVDSVKLLMYHSAPARGHFLHEEEPESGVCGLDGGEGSPEGTAKPVVPADLINQADREGWTAAHIAASKGFKNCLEILCRHAGLEPDRREKCNRTVHDVATDDCKHLLENLHAFKIPLRISVGEVQPDIYCSDDFECENTICILNIRKQTSWDDFSKAVSQALTNHFQAISSDGWWSLEDVTCNNTADSSIGLGASSVRSVTLGNVPWSVGQSFAQSPWDFLRKNKAEQVSVLLSGPQEGCLSSVTYASLIPLQVLQNYLRLVEQYHNVIFHGPEGSLQNYIAHQLALCMKHRQIAAGFSCEIVRAQVDASFSKEQLADLFISSACLIPVKQSPVNKKIIIILENLEKSSMSELLGDFLAPLENRSPESPCTFHKGNGTSGCYYFHEHCFLMGTVAKACLQGSDLLVQQHFRWVQLRWDGEPMQSLLPRFLRRRAVNKFRGQVPSPCDPGCKAVDWAAAVWRQLNSCLTRLGTPEALLGPKYFLSCPVIPGHAQVTVKWMCKLWNAVIAPRVQEAILSRASVERHAGFAQTTAKKTPSQGQQAVVKAALSILLNKAVLHGCPLPRAELDQHTADFKGGSFPLSIVSSYNCCSKKKGENGTWRKVSTSPRKKSGHFSSPTWNKPDLNEEGIRNTTTSQLNCNRNASLSKQKSLENDLSSTLTLDQKLYLGSDDEADLIKELQSMCSSKSESDISKIADSRDDLRRFDSSRNNPTFSATVNNLRMPVSEKEVSPLSSHQTTECNDSKSKTESGVSRVKSFLPVPQSKATLCSQNTKRSSSSSNTRQIEINNNSKEEIWNLHKNEQVEKPNK.

Disordered regions lie at residues 1–26 (MATD…TAEA), 203–225 (KKKT…DMEA), 359–440 (QASH…LHPG), 454–478 (GNAN…SPTS), and 497–615 (SRFT…PPKP). A coiled-coil region spans residues 119–276 (RKMQERMSTQ…EQLKRGSDSK (158 aa)). 2 stretches are compositionally biased toward polar residues: residues 385–396 (GPSTDSAPDLTN) and 418–435 (QSHS…SANA). R498 bears the Asymmetric dimethylarginine mark. Pro residues predominate over residues 606 to 615 (PTTPQLPPKP). ANK repeat units follow at residues 709–739 (GRPT…DINY), 743–772 (DGHS…QVDA), 776–805 (NGFT…DINH), 809–838 (GGQT…DRSV), 842–871 (DGWT…PARG), and 912–942 (EGWT…EPDR). The disordered stretch occupies residues 1449-1490 (KGENGTWRKVSTSPRKKSGHFSSPTWNKPDLNEEGIRNTTTS). S1524 carries the phosphoserine modification. The interval 1579-1663 (VSEKEVSPLS…KNEQVEKPNK (85 aa)) is disordered. Residues 1586–1595 (PLSSHQTTEC) are compositionally biased toward polar residues. Residues 1624–1638 (SQNTKRSSSSSNTRQ) are compositionally biased toward low complexity. Residues 1645 to 1663 (SKEEIWNLHKNEQVEKPNK) show a composition bias toward basic and acidic residues.

As to quaternary structure, interacts with CTTN/cortactin SH3 domain. Interacts with STRN, STRN4/zinedin and MOB4/phocein; this interactions mediate the association with the STRIPAK core complex and may regulate dendritic spine distribution of the STRIPAK complex in hippocampal neurons. Activation of glutamate receptors weakens the interaction with STRN and STRN4.

It is found in the cytoplasm. It localises to the cell cortex. The protein localises to the cell projection. Its subcellular location is the dendritic spine. Functionally, regulates the dendritic spine distribution of CTTN/cortactin in hippocampal neurons, and thus controls dendritic spinogenesis and dendritic spine maintenance. Associates with the striatin-interacting phosphatase and kinase (STRIPAK) core complex to regulate dendritic spine distribution of the STRIPAK complex in hippocampal neurons. In Rhinolophus ferrumequinum (Greater horseshoe bat), this protein is Cortactin-binding protein 2 (CTTNBP2).